The sequence spans 977 residues: Ubiquitin-like modifier-activating enzyme 7 (977 aa).

The protein belongs to the ubiquitin-activating E1 family. Post-translationally, ubiquitinated by RNF170.

Its subcellular location is the cytoplasm. It is found in the nucleus. The protein operates within protein modification; protein ubiquitination. Functionally, E1-activating enzyme that catalyzes the covalent conjugation of the ubiquitin-like protein product of ISG15 to additional interferons stimulated proteins (ISGs) as well as other cellular proteins such as P53 in a process termed protein ISGylation. Plays an essential role in antiviral immunity together with ISG15 by restricting the replication of many viruses including rabies virus, influenza virus, sindbis virus or rotavirus. This chain is Ubiquitin-like modifier-activating enzyme 7, found in Mus musculus (Mouse).